A 339-amino-acid polypeptide reads, in one-letter code: Protein-glutamate methylesterase/protein-glutamine glutaminase 3 (339 aa).

Positions 2–119 (NIGIVNDLPL…GLSTDASPQA (118 aa)) constitute a Response regulatory domain. The residue at position 53 (D53) is a 4-aspartylphosphate. The 196-residue stretch at 141–336 (PGPAPTRGQP…PQLIARIALT (196 aa)) folds into the CheB-type methylesterase domain. Active-site residues include S158, H185, and D278.

This sequence belongs to the CheB family. In terms of processing, phosphorylated by CheA. Phosphorylation of the N-terminal regulatory domain activates the methylesterase activity.

Its subcellular location is the cytoplasm. The enzyme catalyses [protein]-L-glutamate 5-O-methyl ester + H2O = L-glutamyl-[protein] + methanol + H(+). It carries out the reaction L-glutaminyl-[protein] + H2O = L-glutamyl-[protein] + NH4(+). Its function is as follows. Involved in chemotaxis. Part of a chemotaxis signal transduction system that modulates chemotaxis in response to various stimuli. Catalyzes the demethylation of specific methylglutamate residues introduced into the chemoreceptors (methyl-accepting chemotaxis proteins or MCP) by CheR. Also mediates the irreversible deamidation of specific glutamine residues to glutamic acid. This chain is Protein-glutamate methylesterase/protein-glutamine glutaminase 3, found in Burkholderia orbicola (strain AU 1054).